The chain runs to 200 residues: Glycerol-3-phosphate acyltransferase (200 aa).

The next 5 helical transmembrane spans lie at F2–V22, K51–A71, A84–F104, L114–V134, and F159–F179.

It belongs to the PlsY family. As to quaternary structure, probably interacts with PlsX.

Its subcellular location is the cell inner membrane. It carries out the reaction an acyl phosphate + sn-glycerol 3-phosphate = a 1-acyl-sn-glycero-3-phosphate + phosphate. The protein operates within lipid metabolism; phospholipid metabolism. Its function is as follows. Catalyzes the transfer of an acyl group from acyl-phosphate (acyl-PO(4)) to glycerol-3-phosphate (G3P) to form lysophosphatidic acid (LPA). This enzyme utilizes acyl-phosphate as fatty acyl donor, but not acyl-CoA or acyl-ACP. This is Glycerol-3-phosphate acyltransferase from Neisseria meningitidis serogroup C (strain 053442).